The following is a 332-amino-acid chain: GTP 3',8-cyclase (332 aa).

Residues 9 to 220 (RFARKVDYLR…DQVRERIAER (212 aa)) form the Radical SAM core domain. Arginine 18 contributes to the GTP binding site. [4Fe-4S] cluster-binding residues include cysteine 25 and cysteine 29. Residue tyrosine 31 coordinates S-adenosyl-L-methionine. A [4Fe-4S] cluster-binding site is contributed by cysteine 32. Arginine 67 serves as a coordination point for GTP. S-adenosyl-L-methionine is bound at residue glycine 71. Threonine 98 provides a ligand contact to GTP. Serine 122 is an S-adenosyl-L-methionine binding site. GTP is bound at residue lysine 159. Methionine 193 contributes to the S-adenosyl-L-methionine binding site. [4Fe-4S] cluster contacts are provided by cysteine 258 and cysteine 261. 263–265 (RVR) is a GTP binding site. [4Fe-4S] cluster is bound at residue cysteine 275.

The protein belongs to the radical SAM superfamily. MoaA family. Monomer and homodimer. It depends on [4Fe-4S] cluster as a cofactor.

The enzyme catalyses GTP + AH2 + S-adenosyl-L-methionine = (8S)-3',8-cyclo-7,8-dihydroguanosine 5'-triphosphate + 5'-deoxyadenosine + L-methionine + A + H(+). It functions in the pathway cofactor biosynthesis; molybdopterin biosynthesis. Its function is as follows. Catalyzes the cyclization of GTP to (8S)-3',8-cyclo-7,8-dihydroguanosine 5'-triphosphate. This Pseudomonas syringae pv. syringae (strain B728a) protein is GTP 3',8-cyclase.